A 205-amino-acid chain; its full sequence is Holliday junction branch migration complex subunit RuvA (205 aa).

The interval 1–64 is domain I; that stretch reads MIGRLRGTLA…EDAHLLYGFH (64 aa). The tract at residues 65-143 is domain II; it reads EKRERELFRE…AWETSPAMFT (79 aa). The flexible linker stretch occupies residues 144–153; that stretch reads LVSDGPVPVS. The interval 154–205 is domain III; the sequence is GASTAEADAVSALVSLGYKPQEASKAVSAIKDKAGLSSEELIRRSLKGMITK.

Belongs to the RuvA family. As to quaternary structure, homotetramer. Forms an RuvA(8)-RuvB(12)-Holliday junction (HJ) complex. HJ DNA is sandwiched between 2 RuvA tetramers; dsDNA enters through RuvA and exits via RuvB. An RuvB hexamer assembles on each DNA strand where it exits the tetramer. Each RuvB hexamer is contacted by two RuvA subunits (via domain III) on 2 adjacent RuvB subunits; this complex drives branch migration. In the full resolvosome a probable DNA-RuvA(4)-RuvB(12)-RuvC(2) complex forms which resolves the HJ.

It is found in the cytoplasm. Its function is as follows. The RuvA-RuvB-RuvC complex processes Holliday junction (HJ) DNA during genetic recombination and DNA repair, while the RuvA-RuvB complex plays an important role in the rescue of blocked DNA replication forks via replication fork reversal (RFR). RuvA specifically binds to HJ cruciform DNA, conferring on it an open structure. The RuvB hexamer acts as an ATP-dependent pump, pulling dsDNA into and through the RuvAB complex. HJ branch migration allows RuvC to scan DNA until it finds its consensus sequence, where it cleaves and resolves the cruciform DNA. In Pseudomonas putida (strain W619), this protein is Holliday junction branch migration complex subunit RuvA.